The primary structure comprises 348 residues: Protein RecA (348 aa).

An ATP-binding site is contributed by 64 to 71; it reads GPESSGKT. Over residues 325-335 the composition is skewed to basic and acidic residues; sequence YEIDGASKEPL. Residues 325-348 form a disordered region; that stretch reads YEIDGASKEPLEETEETLSLLDDE. Residues 336–348 show a composition bias toward acidic residues; the sequence is EETEETLSLLDDE.

Belongs to the RecA family.

The protein resides in the cytoplasm. Can catalyze the hydrolysis of ATP in the presence of single-stranded DNA, the ATP-dependent uptake of single-stranded DNA by duplex DNA, and the ATP-dependent hybridization of homologous single-stranded DNAs. It interacts with LexA causing its activation and leading to its autocatalytic cleavage. The chain is Protein RecA from Listeria seeligeri.